The primary structure comprises 658 residues: Translation factor GUF1, mitochondrial (658 aa).

Residues 1–40 (MRGCLQTVRWLTSAWQRPRSYSPLSRAAPCRFFNVSIPRN) constitute a mitochondrion transit peptide. The 181-residue stretch at 60–240 (DRFRNFCIVA…TVVEQIPAPV (181 aa)) folds into the tr-type G domain. Residues 69 to 76 (AHVDHGKS), 133 to 137 (DTPGH), and 187 to 190 (NKVD) contribute to the GTP site.

The protein belongs to the TRAFAC class translation factor GTPase superfamily. Classic translation factor GTPase family. LepA subfamily.

It is found in the mitochondrion inner membrane. It catalyses the reaction GTP + H2O = GDP + phosphate + H(+). In terms of biological role, promotes mitochondrial protein synthesis. May act as a fidelity factor of the translation reaction, by catalyzing a one-codon backward translocation of tRNAs on improperly translocated ribosomes. Binds to mitochondrial ribosomes in a GTP-dependent manner. In Paracoccidioides lutzii (strain ATCC MYA-826 / Pb01) (Paracoccidioides brasiliensis), this protein is Translation factor GUF1, mitochondrial.